The chain runs to 291 residues: Protease HtpX homolog (291 aa).

A run of 2 helical transmembrane segments spans residues 4-24 (VFLF…SARL) and 38-58 (LGML…ISLL). Histidine 144 contacts Zn(2+). The active site involves glutamate 145. Histidine 148 serves as a coordination point for Zn(2+). Helical transmembrane passes span 159–179 (LIQG…AYAL) and 199–219 (ISSI…VMYF). Glutamate 224 is a binding site for Zn(2+).

It belongs to the peptidase M48B family. It depends on Zn(2+) as a cofactor.

The protein resides in the cell inner membrane. The chain is Protease HtpX homolog from Chlorobium luteolum (strain DSM 273 / BCRC 81028 / 2530) (Pelodictyon luteolum).